Reading from the N-terminus, the 377-residue chain is Cytochrome c peroxidase, mitochondrial (377 aa).

The N-terminal 17 residues, 1 to 17, are a transit peptide targeting the mitochondrion; sequence MSFRAPNLIRSAAGRRA. Residue His-138 is the Proton acceptor of the active site. A heme b-binding site is contributed by His-261. The active-site Tryptophan radical intermediate is Trp-277.

The protein belongs to the peroxidase family. Cytochrome c peroxidase subfamily. In terms of assembly, forms a one-to-one complex with cytochrome c. The cofactor is heme b.

The protein localises to the mitochondrion matrix. It localises to the mitochondrion intermembrane space. It catalyses the reaction 2 Fe(II)-[cytochrome c] + H2O2 + 2 H(+) = 2 Fe(III)-[cytochrome c] + 2 H2O. Functionally, destroys radicals which are normally produced within the cells and which are toxic to biological systems. In Cryptococcus neoformans var. neoformans serotype D (strain JEC21 / ATCC MYA-565) (Filobasidiella neoformans), this protein is Cytochrome c peroxidase, mitochondrial (CCP1).